The following is a 186-amino-acid chain: Peptidyl-tRNA hydrolase (186 aa).

Residue tyrosine 16 coordinates tRNA. Catalysis depends on histidine 21, which acts as the Proton acceptor. TRNA-binding residues include tyrosine 66, asparagine 68, and asparagine 114.

This sequence belongs to the PTH family. As to quaternary structure, monomer.

The protein resides in the cytoplasm. The enzyme catalyses an N-acyl-L-alpha-aminoacyl-tRNA + H2O = an N-acyl-L-amino acid + a tRNA + H(+). Hydrolyzes ribosome-free peptidyl-tRNAs (with 1 or more amino acids incorporated), which drop off the ribosome during protein synthesis, or as a result of ribosome stalling. Its function is as follows. Catalyzes the release of premature peptidyl moieties from peptidyl-tRNA molecules trapped in stalled 50S ribosomal subunits, and thus maintains levels of free tRNAs and 50S ribosomes. This Ureaplasma urealyticum serovar 10 (strain ATCC 33699 / Western) protein is Peptidyl-tRNA hydrolase.